We begin with the raw amino-acid sequence, 355 residues long: Ion-translocating oxidoreductase complex subunit D (355 aa).

5 helical membrane passes run 13 to 33, 35 to 55, 77 to 97, 98 to 118, and 128 to 148; these read GKLTARIMLWVIFGMLPALAV, VYYFGFGVLIQICLAVALALI, VILTALILAMAIPPYAPYWVI, LIGTFCAVILGKHVYGGLGQN, and VVLLISFPVQMTGWMPPISLL. Threonine 186 carries the post-translational modification FMN phosphoryl threonine. 5 consecutive transmembrane segments (helical) span residues 216 to 236, 245 to 265, 267 to 287, 294 to 314, and 318 to 338; these read AGLGWLQVNLAFFIGGLFLIW, PVAILLSLGIFCGLFDLFGNA, AVGFFAQLFSGAMMFGAFFIA, PVTPKGKWVFGILIGLLICLI, and GNYPDGVAFAVLLANICVPLI.

It belongs to the NqrB/RnfD family. The complex is composed of six subunits: RnfA, RnfB, RnfC, RnfD, RnfE and RnfG. The cofactor is FMN.

It localises to the cell inner membrane. Functionally, part of a membrane-bound complex that couples electron transfer with translocation of ions across the membrane. This is Ion-translocating oxidoreductase complex subunit D from Actinobacillus succinogenes (strain ATCC 55618 / DSM 22257 / CCUG 43843 / 130Z).